A 298-amino-acid polypeptide reads, in one-letter code: Probable GTP 3',8-cyclase (298 aa).

Residues 4 to 227 enclose the Radical SAM core domain; sequence RYGREIRSFR…MQNRKKYLID (224 aa). Arg-13 serves as a coordination point for GTP. [4Fe-4S] cluster contacts are provided by Cys-20 and Cys-24. Tyr-26 is a binding site for S-adenosyl-L-methionine. Residue Cys-27 participates in [4Fe-4S] cluster binding. Position 61 (Lys-61) interacts with GTP. Gly-65 is a binding site for S-adenosyl-L-methionine. Thr-91 serves as a coordination point for GTP. Residue Ser-115 coordinates S-adenosyl-L-methionine. Residue Lys-152 coordinates GTP. [4Fe-4S] cluster-binding residues include Cys-243 and Cys-246. 248–250 serves as a coordination point for GTP; it reads RIR. Cys-260 serves as a coordination point for [4Fe-4S] cluster.

It belongs to the radical SAM superfamily. MoaA family. [4Fe-4S] cluster serves as cofactor.

It catalyses the reaction GTP + AH2 + S-adenosyl-L-methionine = (8S)-3',8-cyclo-7,8-dihydroguanosine 5'-triphosphate + 5'-deoxyadenosine + L-methionine + A + H(+). Its pathway is cofactor biosynthesis; molybdopterin biosynthesis. Catalyzes the cyclization of GTP to (8S)-3',8-cyclo-7,8-dihydroguanosine 5'-triphosphate. This is Probable GTP 3',8-cyclase from Methanococcus maripaludis (strain C5 / ATCC BAA-1333).